Reading from the N-terminus, the 757-residue chain is Serine/threonine-protein phosphatase with EF-hands 2 (757 aa).

The IQ domain occupies 21 to 46; the sequence is KAAALIQRWYRRYMARLEMRRRCTWN. Residues 128–544 are catalytic; that stretch reads ATALVEAFRL…PHIVQYQANK (417 aa). Mn(2+)-binding residues include Asp-179, His-181, Asp-208, and Asn-240. The active-site Proton donor is the His-241. His-292 contacts Mn(2+). Residues 318 to 349 are disordered; the sequence is CKTRKESENREEQKRKDNQTSSGQKPTPWFLP. Residues 321–335 show a composition bias toward basic and acidic residues; it reads RKESENREEQKRKDN. Residue His-492 coordinates Mn(2+). 3 EF-hand domains span residues 572-607, 656-691, and 696-731; these read AHSS…VLHL, RNRS…FSSH, and ITDD…VEQS. Ca(2+) contacts are provided by Asp-585, Asp-587, Ser-589, Asp-596, Asp-669, Asp-671, Ser-673, Glu-680, Asp-709, Asn-711, Asp-713, His-715, and Glu-720.

Belongs to the PPP phosphatase family. Mn(2+) is required as a cofactor. Detected in retina, more specifically in photoreceptors.

It catalyses the reaction O-phospho-L-seryl-[protein] + H2O = L-seryl-[protein] + phosphate. It carries out the reaction O-phospho-L-threonyl-[protein] + H2O = L-threonyl-[protein] + phosphate. With respect to regulation, activated by calcium. May play a role in phototransduction. May dephosphorylate photoactivated rhodopsin. May function as a calcium sensing regulator of ionic currents, energy production or synaptic transmission. The chain is Serine/threonine-protein phosphatase with EF-hands 2 (Ppef2) from Mus musculus (Mouse).